Here is a 190-residue protein sequence, read N- to C-terminus: Lipid A acyltransferase PagP (190 aa).

An N-terminal signal peptide occupies residues 1 to 24 (MNRYLLTTLSAPLLALFFSFSLQA). Catalysis depends on residues H62, D105, and S106.

This sequence belongs to the lipid A palmitoyltransferase family. Homodimer.

It is found in the cell outer membrane. It carries out the reaction a lipid A + a 1,2-diacyl-sn-glycero-3-phosphocholine = a hepta-acyl lipid A + a 2-acyl-sn-glycero-3-phosphocholine. It catalyses the reaction a lipid IVA + a 1,2-diacyl-sn-glycero-3-phosphocholine = a lipid IVB + a 2-acyl-sn-glycero-3-phosphocholine. The catalysed reaction is a lipid IIA + a 1,2-diacyl-sn-glycero-3-phosphocholine = a lipid IIB + a 2-acyl-sn-glycero-3-phosphocholine. Transfers a fatty acid residue from the sn-1 position of a phospholipid to the N-linked hydroxyfatty acid chain on the proximal unit of lipid A or its precursors. The protein is Lipid A acyltransferase PagP of Pantoea ananatis (strain LMG 20103).